We begin with the raw amino-acid sequence, 536 residues long: Heat shock factor protein 2 (536 aa).

Residues lysine 2 and lysine 82 each participate in a glycyl lysine isopeptide (Lys-Gly) (interchain with G-Cter in SUMO2) cross-link. A DNA-binding region spans residues 7–112 (VPAFLSKLWT…LLENIKRKVS (106 aa)). The Nuclear localization signal signature appears at 108–122 (KRKVSSSKPEENKIR). Positions 119-192 (NKIRQEDLTK…VTLVQNNQLV (74 aa)) are hydrophobic repeat HR-A/B. Glycyl lysine isopeptide (Lys-Gly) (interchain with G-Cter in SUMO2) cross-links involve residues lysine 135, lysine 139, lysine 151, lysine 210, lysine 218, and lysine 237. Residues 195 to 210 (KRKRPLLLNTNGAQKK) carry the Nuclear localization signal motif. Residues 300–337 (QSGEQNEPARESLSSGSDGSSPLMSSAVQLNGSSSLTS) are disordered. Residues 311-325 (SLSSGSDGSSPLMSS) show a composition bias toward low complexity. The span at 326–337 (AVQLNGSSSLTS) shows a compositional bias: polar residues. Positions 360 to 385 (LLDYLDSIDCSLEDFQAMLSGRQFSI) are hydrophobic repeat HR-C. The interval 407–438 (NNTKSENKGLETTKNNVVQPVSEEGRKSKSKP) is disordered. Residues 429–438 (EEGRKSKSKP) are compositionally biased toward basic and acidic residues.

It belongs to the HSF family. In terms of assembly, DNA-binding homotrimer in stressed or heat shocked cells, otherwise found as a homodimer.

Its subcellular location is the cytoplasm. The protein localises to the nucleus. Its function is as follows. DNA-binding protein that specifically binds heat shock promoter elements (HSE) and activates transcription. In higher eukaryotes, HSF is unable to bind to the HSE unless the cells are heat shocked. The protein is Heat shock factor protein 2 (HSF2) of Homo sapiens (Human).